A 295-amino-acid chain; its full sequence is Pyridoxal 5'-phosphate synthase subunit PdxS (295 aa).

D-ribose 5-phosphate is bound at residue Asp-25. Lys-82 (schiff-base intermediate with D-ribose 5-phosphate) is an active-site residue. Position 154 (Gly-154) interacts with D-ribose 5-phosphate. A D-glyceraldehyde 3-phosphate-binding site is contributed by Arg-166. D-ribose 5-phosphate is bound by residues Gly-215 and 236 to 237; that span reads GS.

It belongs to the PdxS/SNZ family. In terms of assembly, in the presence of PdxT, forms a dodecamer of heterodimers.

The catalysed reaction is aldehydo-D-ribose 5-phosphate + D-glyceraldehyde 3-phosphate + L-glutamine = pyridoxal 5'-phosphate + L-glutamate + phosphate + 3 H2O + H(+). The protein operates within cofactor biosynthesis; pyridoxal 5'-phosphate biosynthesis. Catalyzes the formation of pyridoxal 5'-phosphate from ribose 5-phosphate (RBP), glyceraldehyde 3-phosphate (G3P) and ammonia. The ammonia is provided by the PdxT subunit. Can also use ribulose 5-phosphate and dihydroxyacetone phosphate as substrates, resulting from enzyme-catalyzed isomerization of RBP and G3P, respectively. The sequence is that of Pyridoxal 5'-phosphate synthase subunit PdxS from Staphylococcus saprophyticus subsp. saprophyticus (strain ATCC 15305 / DSM 20229 / NCIMB 8711 / NCTC 7292 / S-41).